The following is a 688-amino-acid chain: MQDIQLDKRLSELLSQAVTPHNAQPLMQALCQSLNEHNIRYYVDDAPSITDSEYDRLMQRLKQLEAEYPQFVAADSPTQRVGGMALAKFEQITHLKPMLSLDNAFDEADFSAFHKRVSDRVGEVSFCCEPKLDGLAVSILYRNGVLERAATRGDGTVGEDITENVKTIKSIPLKLRGDNYPELVEVRGEAFMPKAAFEALNERARLKDEKLFVNPRNAAAGSLRQLDSKITASRALSFYAYALGVVEPTSHELAKTHYEQLQQLKSWGLPVSSEIKVCDELSQVFAYYQDILTRRSYLPFEIDGVVMKVNDIAQQQTLGFVAKSPRWAIAYKFPAQEEMTLLEGVDFQVGRTGAVTPVARLKPVFVGGVTVSNATLHNADEIERLGVMVGDTVIIRRAGDVIPQIVAIVPERRPEDAKAIAFPQHCPVCGSLVERLEGEAVTRCSGGLFCEAQRKEAIKHFASRKALDIDGMGDKIVEQLIDKELVQSPADLFKLPASMMTMLDRMGMKSATNLAQAIEAAKTTTLPRFLYALGIREVGEATASNLATHFGSLEALRVATIEQLIQVEDIGEVVAQHVAHFFAQPHNLEVIDALIAAGVNWPTIAAPSADEQPLKGQTWVLTGTLNQLNRNDAKAQLQALGAKVAGSVSKNTDCLVAGEAAGSKLAKAQELGVKVIGEDELLALLANS.

NAD(+)-binding positions include 51 to 55 (DSEYD), 100 to 101 (SL), and Glu129. Lys131 functions as the N6-AMP-lysine intermediate in the catalytic mechanism. Positions 152, 189, 308, and 332 each coordinate NAD(+). Zn(2+) is bound by residues Cys426, Cys429, Cys444, and Cys450. The 80-residue stretch at 609 to 688 (ADEQPLKGQT…DELLALLANS (80 aa)) folds into the BRCT domain.

This sequence belongs to the NAD-dependent DNA ligase family. LigA subfamily. Mg(2+) serves as cofactor. Requires Mn(2+) as cofactor.

The catalysed reaction is NAD(+) + (deoxyribonucleotide)n-3'-hydroxyl + 5'-phospho-(deoxyribonucleotide)m = (deoxyribonucleotide)n+m + AMP + beta-nicotinamide D-nucleotide.. Functionally, DNA ligase that catalyzes the formation of phosphodiester linkages between 5'-phosphoryl and 3'-hydroxyl groups in double-stranded DNA using NAD as a coenzyme and as the energy source for the reaction. It is essential for DNA replication and repair of damaged DNA. This chain is DNA ligase, found in Shewanella sp. (strain MR-4).